We begin with the raw amino-acid sequence, 761 residues long: MLGREFYSNVSHVEQGERYTVSHHGSTEDTRQGGNDDLQNTPARSNASTDYSTQSLSNQAGMQPAARRTSMVTEGHVARSQQPLTVNTDFFRGTDQPNATPHPQADPARYAYDSHFHPNTEIANFQTPQMHNYHPYHPNLYHHQYPMHNPSPLHHLQQARVGQMIYQTDPANPSGFPQASPSDLSTTSSQSYYHTGRSSPSVSSSTCSSPVELEDLSVPAKTRPADGFTNLQRTTCPDFSIPSTEQCMQELTPRIRPPSAEQQAPSIGASPPQEFSKASVFLCNSELWRKFHEHRTEMIITKQGRRMFPQLVFRLSGLNPAAHYNVFVDMVIADPNSWKFQSGKWVATGKSDGVPRATGIFKHPDSPNTGEHWMRQDIAFSKLKLTNNRGKDSGYLVINSMHIYQPRIHVLDLTGARVLQTHSFPETQFIGVTAYQNTDITQLKIDHNPFAKGFRDNYDSFATRERLSYVASLQEQRNRTKPVQCTAANAIIPSDTTGFPCQTNPTQRSNGQHEGRPLPMKLIRASEPCSSTNLAPACNSGSGMSGDAICSDSAPSSTIRHSPKSIGEREGALPNLGALNNSGHPGSVLDTPPNQSPHGGCERSNEKHTPAHKLGEGLGCGMLECGEIPWLNTPPSVCSSDNSNPDLPSAKRLRISPAGSGSPSVTSGTSLFTSGSSAAPSPPLLTTAPTAHIAPGLDSTLSTEGVVQCSNRSLVMPQPYYGVGGSFAYQNDSHMGYSYMGQTRQGLNLATSAPYYYQQNN.

Disordered regions lie at residues 1–85 (MLGR…QPLT) and 167–210 (QTDP…CSSP). Polar residues-rich tracts occupy residues 37 to 61 (DLQN…NQAG) and 167 to 179 (QTDP…FPQA). Low complexity-rich tracts occupy residues 180-191 (SPSDLSTTSSQS) and 198-210 (SSPS…CSSP). The segment at residues 287-456 (LWRKFHEHRT…HNPFAKGFRD (170 aa)) is a DNA-binding region (T-box). The segment covering 496-510 (TTGFPCQTNPTQRSN) has biased composition (polar residues). 3 disordered regions span residues 496–515 (TTGF…QHEG), 545–612 (SGDA…TPAH), and 637–687 (VCSS…LLTT). A compositionally biased stretch (basic and acidic residues) spans 600-612 (GCERSNEKHTPAH). Positions 637–646 (VCSSDNSNPD) are enriched in polar residues. Over residues 656-687 (SPAGSGSPSVTSGTSLFTSGSSAAPSPPLLTT) the composition is skewed to low complexity.

Its subcellular location is the nucleus. Its function is as follows. Probable transcriptional regulator involved in developmental processes. The chain is T-box protein 1 (tbr1) from Patiria pectinifera (Starfish).